The chain runs to 189 residues: Movement protein p22 (189 aa).

The protein belongs to the tombusvirus/aureusvirus movement protein p22 family. As to quaternary structure, interacts with host protein HFI22. In terms of processing, phosphorylated.

It localises to the host membrane. Functionally, cell-to-cell movement. Displays RNA-binding activity. The chain is Movement protein p22 from Capsicum annuum (Capsicum pepper).